The following is a 369-amino-acid chain: Chorismate synthase (369 aa).

NADP(+)-binding residues include arginine 48 and arginine 54. Residues 125–127 (RSS), 238–239 (NA), glycine 278, 293–297 (KPTSS), and arginine 319 each bind FMN.

This sequence belongs to the chorismate synthase family. As to quaternary structure, homotetramer. The cofactor is FMNH2.

The enzyme catalyses 5-O-(1-carboxyvinyl)-3-phosphoshikimate = chorismate + phosphate. It functions in the pathway metabolic intermediate biosynthesis; chorismate biosynthesis; chorismate from D-erythrose 4-phosphate and phosphoenolpyruvate: step 7/7. Catalyzes the anti-1,4-elimination of the C-3 phosphate and the C-6 proR hydrogen from 5-enolpyruvylshikimate-3-phosphate (EPSP) to yield chorismate, which is the branch point compound that serves as the starting substrate for the three terminal pathways of aromatic amino acid biosynthesis. This reaction introduces a second double bond into the aromatic ring system. This is Chorismate synthase from Nitrosococcus oceani (strain ATCC 19707 / BCRC 17464 / JCM 30415 / NCIMB 11848 / C-107).